Here is a 368-residue protein sequence, read N- to C-terminus: Endoglucanase (368 aa).

Residues 1–21 form the signal peptide; the sequence is MNVLRSGIVTMLLLAAFSVQA. The active-site Proton donor is Glu55. Asp116 (nucleophile) is an active-site residue.

Belongs to the glycosyl hydrolase 8 (cellulase D) family.

It localises to the secreted. It carries out the reaction Endohydrolysis of (1-&gt;4)-beta-D-glucosidic linkages in cellulose, lichenin and cereal beta-D-glucans.. It participates in glycan metabolism; bacterial cellulose biosynthesis. Hydrolyzes carboxymethylcellulose. This is Endoglucanase (bcsZ) from Escherichia coli (strain K12).